Consider the following 616-residue polypeptide: Hemagglutinin-neuraminidase (616 aa).

The Intravirion portion of the chain corresponds to 1–26 (MDRAVSQVALENDEREAKNTWRLVFR). The chain crosses the membrane as a helical span at residues 27–47 (IAILLLTVVTLAISAAALAYS). At 48-616 (MEASTPSDLV…ELESYAASWP (569 aa)) the chain is on the virion surface side. A glycan (N-linked (GlcNAc...) asparagine; by host) is linked at N119. The tract at residues 124 to 152 (GAPIHDPDYIGGIGKELIVDDASDVTSFY) is important for interaction with fusion/F protein. 3 disulfide bridges follow: C172–C196, C186–C247, and C238–C251. Positions 234–239 (NRKSCS) are involved in neuraminidase activity. N-linked (GlcNAc...) asparagine; by host glycosylation is found at N341 and N433. 2 cysteine pairs are disulfide-bonded: C344-C461 and C455-C465. N-linked (GlcNAc...) asparagine; by host glycans are attached at residues N481, N538, and N600. C531 and C542 are oxidised to a cystine.

This sequence belongs to the paramyxoviruses hemagglutinin-neuraminidase family. As to quaternary structure, homotetramer; composed of disulfide-linked homodimers. Interacts with F protein trimer. Interacts with host CG-1B; this interaction inhibits viral adsorption and replication rather than internalization.

Its subcellular location is the virion membrane. It is found in the host cell membrane. It catalyses the reaction Hydrolysis of alpha-(2-&gt;3)-, alpha-(2-&gt;6)-, alpha-(2-&gt;8)- glycosidic linkages of terminal sialic acid residues in oligosaccharides, glycoproteins, glycolipids, colominic acid and synthetic substrates.. Its function is as follows. Mediates the viral entry into the host cell together with fusion/F protein. Attaches the virus to sialic acid-containing cell receptors and thereby initiates infection. Binding of HN protein to the receptor induces a conformational change that allows the F protein to trigger virion/cell membranes fusion. Neuraminidase activity ensures the efficient spread of the virus by dissociating the mature virions from the neuraminic acid containing glycoproteins. This Gallus gallus (Chicken) protein is Hemagglutinin-neuraminidase (HN).